We begin with the raw amino-acid sequence, 512 residues long: Ammonium transporter 2 (512 aa).

At 1-47 (MSSVNSIPTATSTVYISVLPATATPSGGSGGNVLHEDLNKFYDYGNT) the chain is on the extracellular side. Residues 48-68 (SWILACTPLCLIMVPGVAFFY) traverse the membrane as a helical segment. The Cytoplasmic portion of the chain corresponds to 69–77 (SGLARRKNT). The helical transmembrane segment at 78 to 98 (LALIMLSMLGLCVSFFQWYFW) threads the bilayer. Topologically, residues 99 to 137 (GYSLAFSQTGTSGYIGNLRHFAFIRTLADYSPGSNNIPE) are extracellular. A helical transmembrane segment spans residues 138 to 158 (LVFANFQGMFAAITVALFTGA). Residues 159 to 167 (AAERGRIGP) are Cytoplasmic-facing. Residues 168-188 (MLIITFVWLTVVYCPIACWIW) form a helical membrane-spanning segment. The Extracellular portion of the chain corresponds to 189 to 201 (NPNGWAFKFGVYD). The helical transmembrane segment at 202–222 (FAGGGPVEVGSGFAALAYTVC) threads the bilayer. At 223–238 (LGRRSKFVEEQFRPHS) the chain is on the cytoplasmic side. The chain crosses the membrane as a helical span at residues 239–259 (VLNVVLGTSLLWFGWLGFNGG). Over 260–267 (SAYGSNLR) the chain is Extracellular. The helical transmembrane segment at 268–288 (AAMAITNTNLAGAVAGLVWVI) threads the bilayer. Over 289–300 (YDYIFRTRKWST) the chain is Cytoplasmic. A helical transmembrane segment spans residues 301–321 (IGFCSGVVAGLVAATPCAGFV). Residue serine 322 is a topological domain, extracellular. The chain crosses the membrane as a helical span at residues 323 to 343 (PHASLAIGAITGLCCNWAIKL). Topologically, residues 344-354 (KSHMRIDDAMD) are cytoplasmic. Residues 355–375 (IFAIHGVAGFVGTFLNGLFAV) traverse the membrane as a helical segment. Over 376-406 (DYIAAMDGIYVGENKIRGGWFDHHWRQLGLQ) the chain is Extracellular. Residues 407-427 (MAYICAVGAYDFVVTFIILFI) traverse the membrane as a helical segment. Residues 428 to 512 (TDKIPYLQLR…TNPLELGLTI (85 aa)) are Cytoplasmic-facing.

It belongs to the ammonia transporter channel (TC 1.A.11.2) family.

It localises to the membrane. In terms of biological role, transporter for ammonium to use as a nitrogen source. This Schizosaccharomyces pombe (strain 972 / ATCC 24843) (Fission yeast) protein is Ammonium transporter 2 (amt2).